We begin with the raw amino-acid sequence, 335 residues long: MYSLIRKCLFLMDAETAHNFSIQALKLAGKLPINVLPMPLNPVEVMGLQFKNPIGLAAGADKNGEAIDGFGKLGFGFIEVGTVTPVAQDGNPKPRQFRILEAEGIINRNGFNNLGVDVLVENVKKAKYDGIIGINIGKNAVTPIERALDDYQICLRKVYEHADYITVNISSPNTKNLRTLQYGEALDDLLRSLKSEQESLSQKFNRYKPLVLKIAPDLTDEEIASVADGLVRHKIDGVIAGNTTLSRDPVVGLKNAEHQGGLSGNPLNTLSTRLISTLAKELNGALPIIGSGGIHSVASGQEKIDAGASLLQVYSAMIYQGPALIQNLAKHIQVR.

FMN-binding positions include 58 to 62 and T82; that span reads AGADK. Residue K62 participates in substrate binding. Residue 107-111 coordinates substrate; sequence NRNGF. FMN is bound by residues N135 and N168. Position 168 (N168) interacts with substrate. Residue S171 is the Nucleophile of the active site. N173 is a binding site for substrate. Residues K213 and G241 each contribute to the FMN site. 242-243 provides a ligand contact to substrate; that stretch reads NT. FMN-binding positions include G264, G293, and 314–315; that span reads YS.

It belongs to the dihydroorotate dehydrogenase family. Type 2 subfamily. In terms of assembly, monomer. FMN serves as cofactor.

The protein resides in the cell membrane. The enzyme catalyses (S)-dihydroorotate + a quinone = orotate + a quinol. It participates in pyrimidine metabolism; UMP biosynthesis via de novo pathway; orotate from (S)-dihydroorotate (quinone route): step 1/1. Catalyzes the conversion of dihydroorotate to orotate with quinone as electron acceptor. The sequence is that of Dihydroorotate dehydrogenase (quinone) from Actinobacillus pleuropneumoniae serotype 3 (strain JL03).